The primary structure comprises 169 residues: uncharacterized protein (169 aa).

Residues Asn13, Asn29, Asn39, and Asn48 are each glycosylated (N-linked (GlcNAc...) asparagine; by host). The Cell attachment site motif lies at 109–111; the sequence is RGD. The N-linked (GlcNAc...) asparagine; by host glycan is linked to Asn135. A helical membrane pass occupies residues 145–165; sequence IYHMAIVYILIMYQIYILSLI.

Its subcellular location is the membrane. This is an uncharacterized protein from Acanthamoeba polyphaga (Amoeba).